We begin with the raw amino-acid sequence, 66 residues long: Large ribosomal subunit protein uL29 (66 aa).

Belongs to the universal ribosomal protein uL29 family. Part of the 50S ribosomal subunit.

The chain is Large ribosomal subunit protein uL29 from Thermococcus kodakarensis (strain ATCC BAA-918 / JCM 12380 / KOD1) (Pyrococcus kodakaraensis (strain KOD1)).